The primary structure comprises 514 residues: 2-isopropylmalate synthase (514 aa).

The Pyruvate carboxyltransferase domain occupies 5–268 (LIIFDTTLRD…DVGIDTSQIV (264 aa)). Residues Asp-14, His-202, His-204, and Asn-239 each coordinate Mn(2+). The segment at 395-514 (KFVSLSQRSE…KDDKVNPQRS (120 aa)) is regulatory domain.

Belongs to the alpha-IPM synthase/homocitrate synthase family. LeuA type 1 subfamily. As to quaternary structure, homodimer. Mn(2+) is required as a cofactor.

Its subcellular location is the cytoplasm. It carries out the reaction 3-methyl-2-oxobutanoate + acetyl-CoA + H2O = (2S)-2-isopropylmalate + CoA + H(+). Its pathway is amino-acid biosynthesis; L-leucine biosynthesis; L-leucine from 3-methyl-2-oxobutanoate: step 1/4. In terms of biological role, catalyzes the condensation of the acetyl group of acetyl-CoA with 3-methyl-2-oxobutanoate (2-ketoisovalerate) to form 3-carboxy-3-hydroxy-4-methylpentanoate (2-isopropylmalate). In Burkholderia cenocepacia (strain ATCC BAA-245 / DSM 16553 / LMG 16656 / NCTC 13227 / J2315 / CF5610) (Burkholderia cepacia (strain J2315)), this protein is 2-isopropylmalate synthase.